We begin with the raw amino-acid sequence, 301 residues long: 4-diphosphocytidyl-2-C-methyl-D-erythritol kinase (301 aa).

Lysine 10 is an active-site residue. Proline 96 to serine 106 contacts ATP. Aspartate 138 is an active-site residue.

Belongs to the GHMP kinase family. IspE subfamily.

It carries out the reaction 4-CDP-2-C-methyl-D-erythritol + ATP = 4-CDP-2-C-methyl-D-erythritol 2-phosphate + ADP + H(+). Its pathway is isoprenoid biosynthesis; isopentenyl diphosphate biosynthesis via DXP pathway; isopentenyl diphosphate from 1-deoxy-D-xylulose 5-phosphate: step 3/6. Its function is as follows. Catalyzes the phosphorylation of the position 2 hydroxy group of 4-diphosphocytidyl-2C-methyl-D-erythritol. The polypeptide is 4-diphosphocytidyl-2-C-methyl-D-erythritol kinase (Alcanivorax borkumensis (strain ATCC 700651 / DSM 11573 / NCIMB 13689 / SK2)).